A 357-amino-acid chain; its full sequence is Phosphoribosylformylglycinamidine cyclo-ligase (357 aa).

Belongs to the AIR synthase family.

Its subcellular location is the cytoplasm. It catalyses the reaction 2-formamido-N(1)-(5-O-phospho-beta-D-ribosyl)acetamidine + ATP = 5-amino-1-(5-phospho-beta-D-ribosyl)imidazole + ADP + phosphate + H(+). The protein operates within purine metabolism; IMP biosynthesis via de novo pathway; 5-amino-1-(5-phospho-D-ribosyl)imidazole from N(2)-formyl-N(1)-(5-phospho-D-ribosyl)glycinamide: step 2/2. The protein is Phosphoribosylformylglycinamidine cyclo-ligase of Nitrobacter winogradskyi (strain ATCC 25391 / DSM 10237 / CIP 104748 / NCIMB 11846 / Nb-255).